The primary structure comprises 65 residues: Gallinacin-1 (65 aa).

The signal sequence occupies residues 1–19 (MRIVYLLLPFILLLAQGAA). The propeptide occupies 20–25 (GSSQAL). Disulfide bonds link C31–C59, C38–C53, and C43–C60.

It belongs to the beta-defensin family. As to expression, strong expression in the bone marrow, lung, testis. Moderate expression in the bursa and intestine. Low expression in the cloaca, gall bladder, brain and pancreas. Expressed in the vagina, ovarian stroma and the theca and granulosa layers of the ovarian follicle.

The protein localises to the secreted. It localises to the cytoplasmic granule. In terms of biological role, has bactericidal activity. Potent activity against E.coli ML-35, L.monocytogenes EGD and C.albicans. The sequence is that of Gallinacin-1 (GAL1) from Gallus gallus (Chicken).